The sequence spans 182 residues: NADH-quinone oxidoreductase subunit I (182 aa).

2 consecutive 4Fe-4S ferredoxin-type domains span residues 52–82 (LTRD…LQKA) and 92–121 (EFFR…LTPD). Cys-62, Cys-65, Cys-68, Cys-72, Cys-101, Cys-104, Cys-107, and Cys-111 together coordinate [4Fe-4S] cluster.

This sequence belongs to the complex I 23 kDa subunit family. As to quaternary structure, NDH-1 is composed of 13 different subunits. Subunits NuoA, H, J, K, L, M, N constitute the membrane sector of the complex. [4Fe-4S] cluster is required as a cofactor.

The protein localises to the cell inner membrane. The catalysed reaction is a quinone + NADH + 5 H(+)(in) = a quinol + NAD(+) + 4 H(+)(out). In terms of biological role, NDH-1 shuttles electrons from NADH, via FMN and iron-sulfur (Fe-S) centers, to quinones in the respiratory chain. The immediate electron acceptor for the enzyme in this species is believed to be ubiquinone. Couples the redox reaction to proton translocation (for every two electrons transferred, four hydrogen ions are translocated across the cytoplasmic membrane), and thus conserves the redox energy in a proton gradient. This chain is NADH-quinone oxidoreductase subunit I, found in Pseudomonas aeruginosa (strain LESB58).